We begin with the raw amino-acid sequence, 296 residues long: 4-hydroxy-tetrahydrodipicolinate synthase (296 aa).

Thr-45 is a pyruvate binding site. Tyr-133 serves as the catalytic Proton donor/acceptor. Catalysis depends on Lys-161, which acts as the Schiff-base intermediate with substrate. Pyruvate is bound at residue Ile-203.

It belongs to the DapA family. Homotetramer; dimer of dimers.

The protein resides in the cytoplasm. The catalysed reaction is L-aspartate 4-semialdehyde + pyruvate = (2S,4S)-4-hydroxy-2,3,4,5-tetrahydrodipicolinate + H2O + H(+). Its pathway is amino-acid biosynthesis; L-lysine biosynthesis via DAP pathway; (S)-tetrahydrodipicolinate from L-aspartate: step 3/4. In terms of biological role, catalyzes the condensation of (S)-aspartate-beta-semialdehyde [(S)-ASA] and pyruvate to 4-hydroxy-tetrahydrodipicolinate (HTPA). This is 4-hydroxy-tetrahydrodipicolinate synthase from Idiomarina loihiensis (strain ATCC BAA-735 / DSM 15497 / L2-TR).